The chain runs to 233 residues: DNA-directed RNA polymerase V subunit 5C (233 aa).

The protein belongs to the archaeal Rpo5/eukaryotic RPB5 RNA polymerase subunit family. Component of the RNA polymerase V complex. As to expression, expressed in flower buds and siliques.

Its subcellular location is the nucleus. Functionally, DNA-dependent RNA polymerase catalyzes the transcription of DNA into RNA using the four ribonucleoside triphosphates as substrates. Component of RNA polymerase V involved in RNA-directed DNA methylation-dependent (RdDM) silencing of endogenous repeated sequences, including transposable elements. This is DNA-directed RNA polymerase V subunit 5C (NRPE5C) from Arabidopsis thaliana (Mouse-ear cress).